The following is a 310-amino-acid chain: TLC domain-containing protein 2 (310 aa).

The next 6 membrane-spanning stretches (helical) occupy residues 6–26 (LLVA…LQLL), 40–60 (NIFV…VGLW), 79–99 (VLVA…LWNQ), 117–137 (CLST…SLLL), 167–187 (ASLA…SLWL), and 194–214 (LSLA…SISI). The 195-residue stretch at 33–227 (RDRWMWRNIF…IRILTKDILQ (195 aa)) folds into the TLC domain.

The protein belongs to the TLCD family.

It is found in the cell membrane. In terms of biological role, regulates the composition and fluidity of the plasma membrane. Inhibits the incorporation of membrane-fluidizing phospholipids containing omega-3 long-chain polyunsaturated fatty acids (LCPUFA) and thereby promotes membrane rigidity. Does not appear to have any effect on LCPUFA synthesis. The polypeptide is TLC domain-containing protein 2 (Tlcd2) (Mus musculus (Mouse)).